The sequence spans 459 residues: Argininosuccinate lyase (459 aa).

This sequence belongs to the lyase 1 family. Argininosuccinate lyase subfamily.

It localises to the cytoplasm. It catalyses the reaction 2-(N(omega)-L-arginino)succinate = fumarate + L-arginine. It functions in the pathway amino-acid biosynthesis; L-arginine biosynthesis; L-arginine from L-ornithine and carbamoyl phosphate: step 3/3. This is Argininosuccinate lyase from Ruminiclostridium cellulolyticum (strain ATCC 35319 / DSM 5812 / JCM 6584 / H10) (Clostridium cellulolyticum).